We begin with the raw amino-acid sequence, 569 residues long: Endonuclease/exonuclease/phosphatase family domain-containing protein 1 (569 aa).

A disordered region spans residues 1-20 (MGSTLGCHRSIPRDPSDLSH). The N-myristoyl glycine moiety is linked to residue Gly-2. The segment covering 11 to 20 (IPRDPSDLSH) has biased composition (basic and acidic residues). Ser-16, Ser-21, and Ser-25 each carry phosphoserine. The 30-residue stretch at 38-67 (ERLNINTATEEELMTLPGVTRAVARSIVEY) folds into the HhH domain. Phosphoserine occurs at positions 106, 110, 160, and 173. Residues 200-225 (SRPPSTHTNGGLTFTAKPHPSPTSLS) are disordered. Residues 202 to 211 (PPSTHTNGGL) show a composition bias toward polar residues. Position 265 is a phosphothreonine (Thr-265). Ser-428 bears the Phosphoserine mark. Residues 545 to 569 (SKKDAPRNGSGVALERSEANIKHER) form a disordered region. Positions 559 to 569 (ERSEANIKHER) are enriched in basic and acidic residues.

The polypeptide is Endonuclease/exonuclease/phosphatase family domain-containing protein 1 (EEPD1) (Homo sapiens (Human)).